Reading from the N-terminus, the 173-residue chain is Probable xanthine dehydrogenase subunit E (173 aa).

The region spanning 14-90 is the 2Fe-2S ferredoxin-type domain; it reads EQFRMTVNGQ…GHSITTIEGL (77 aa). [2Fe-2S] cluster contacts are provided by Cys52, Cys57, Cys60, Cys72, Cys110, Cys113, Cys145, and Cys147.

Could be composed of four subunits: PucA, PucC, PucD and PucE. The cofactor is [2Fe-2S] cluster.

The catalysed reaction is xanthine + NAD(+) + H2O = urate + NADH + H(+). The enzyme catalyses hypoxanthine + NAD(+) + H2O = xanthine + NADH + H(+). It participates in purine metabolism; hypoxanthine degradation; urate from hypoxanthine: step 1/2. The protein operates within purine metabolism; hypoxanthine degradation; urate from hypoxanthine: step 2/2. Its function is as follows. Oxidizes hypoxanthine and xanthine to uric acid. This Bacillus subtilis (strain 168) protein is Probable xanthine dehydrogenase subunit E (pucE).